Reading from the N-terminus, the 224-residue chain is UPF0758 protein PSPTO_0086 (224 aa).

Positions 102-224 (ALENPAQVRN…PLSMVEKGLM (123 aa)) constitute an MPN domain. Positions 173, 175, and 186 each coordinate Zn(2+). The JAMM motif motif lies at 173–186 (HNHPSGITTPSRSD).

It belongs to the UPF0758 family.

This is UPF0758 protein PSPTO_0086 from Pseudomonas syringae pv. tomato (strain ATCC BAA-871 / DC3000).